Here is an 85-residue protein sequence, read N- to C-terminus: Conotoxin Im28.1 (85 aa).

The signal sequence occupies residues 1–21 (MPKLEMMLLVLLILPLCYIDA). A propeptide spanning residues 22 to 40 (VGPPPPWNMEDEIIEHWQK) is cleaved from the precursor.

Belongs to the conotoxin D superfamily. Contains 5 disulfide bonds. As to expression, expressed by the venom duct.

The protein localises to the secreted. In terms of biological role, probable neurotoxin. The chain is Conotoxin Im28.1 from Conus imperialis (Imperial cone).